Here is a 184-residue protein sequence, read N- to C-terminus: uncharacterized protein (184 aa).

The signal sequence occupies residues 1-23 (MFCLLHLCFYLANFASSIKRTHA).

The protein resides in the secreted. This is an uncharacterized protein from Homo sapiens (Human).